We begin with the raw amino-acid sequence, 285 residues long: NAD kinase (285 aa).

Aspartate 66 acts as the Proton acceptor in catalysis. Residues 66–67 (DG), 137–138 (ND), arginine 148, arginine 165, aspartate 167, and 178–183 (TAYSLS) each bind NAD(+).

This sequence belongs to the NAD kinase family. It depends on a divalent metal cation as a cofactor.

It is found in the cytoplasm. The enzyme catalyses NAD(+) + ATP = ADP + NADP(+) + H(+). Involved in the regulation of the intracellular balance of NAD and NADP, and is a key enzyme in the biosynthesis of NADP. Catalyzes specifically the phosphorylation on 2'-hydroxyl of the adenosine moiety of NAD to yield NADP. In Chlorobium phaeobacteroides (strain BS1), this protein is NAD kinase.